A 61-amino-acid polypeptide reads, in one-letter code: Lens epithelial cell protein LEP503 (61 aa).

The sequence is that of Lens epithelial cell protein LEP503 (Lenep) from Mus musculus (Mouse).